The following is a 447-amino-acid chain: Serine/threonine-protein phosphatase 2A 55 kDa regulatory subunit B gamma isoform (447 aa).

WD repeat units follow at residues 22 to 61 (TEAD…KNAP), 87 to 128 (EIEE…KRPE), 171 to 209 (GHTY…RSFN), 220 to 260 (DLTE…LCDK), 279 to 317 (EIIS…RPIE), 334 to 375 (ESDC…DVTL), and 410 to 446 (DFTK…NSDM).

The protein belongs to the phosphatase 2A regulatory subunit B family. As to quaternary structure, PP2A consists of a common heterodimeric core enzyme, composed of a 36 kDa catalytic subunit (subunit C) and a 65 kDa constant regulatory subunit (PR65 or subunit A), that associates with a variety of regulatory subunits. Proteins that associate with the core dimer include three families of regulatory subunits B (the R2/B/PR55/B55, R3/B''/PR72/PR130/PR59 and R5/B'/B56 families), the 48 kDa variable regulatory subunit, viral proteins, and cell signaling molecules. Interacts with IER5.

Functionally, the B regulatory subunit might modulate substrate selectivity and catalytic activity, and might also direct the localization of the catalytic enzyme to a particular subcellular compartment. The polypeptide is Serine/threonine-protein phosphatase 2A 55 kDa regulatory subunit B gamma isoform (Ppp2r2c) (Mus musculus (Mouse)).